The primary structure comprises 501 residues: MAINAQEISALIKQQIENFKPNFDVTETGVVTYIGDGIARAHGLENAMSGELLNFENGSYGMAQNLESTDVGIIILGDFTDIREGDTIRRTGKIMEVPVGESLIGRVVDPLGRPVDGLGEIHTDKTRPVEAPAPGVMQRKSVSEPLQTGLKAIDALVPIGRGQRELIIGDRQTGKTTIAIDTILNQKDQDMICIYVAIGQKESTVRTQVETLRQYGALDYTIVVTASASQPSPLLFLAPYAGVAMAEEFMYQGKHVLIVYDDLSKQAVAYRELSLLLRRPPGREAFPGDVFYLHSRLLERSAKVSDELGGGSITALPFIETQAGDISAYIATNVISITDGQIFLGDGLFNAGIRPAIDAGSSVSRVGGSAQIKAMKKVAGTLRIDLASYRELEAFTKFGSDLDAATQAKLNRGRRTVEVLKQPVHKPLPVEKQVTILYALTHGFLDTVPVDDIVRFEEEFHAFFDAQHPEILETIRDTKDLPEEAVLDAAITEFLNQSSFQ.

169–176 (GDRQTGKT) is a binding site for ATP.

Belongs to the ATPase alpha/beta chains family. F-type ATPases have 2 components, CF(1) - the catalytic core - and CF(0) - the membrane proton channel. CF(1) has five subunits: alpha(3), beta(3), gamma(1), delta(1), epsilon(1). CF(0) has three main subunits: a(1), b(2) and c(9-12). The alpha and beta chains form an alternating ring which encloses part of the gamma chain. CF(1) is attached to CF(0) by a central stalk formed by the gamma and epsilon chains, while a peripheral stalk is formed by the delta and b chains.

Its subcellular location is the cell membrane. It catalyses the reaction ATP + H2O + 4 H(+)(in) = ADP + phosphate + 5 H(+)(out). In terms of biological role, produces ATP from ADP in the presence of a proton gradient across the membrane. The alpha chain is a regulatory subunit. The polypeptide is ATP synthase subunit alpha (Streptococcus pneumoniae (strain Hungary19A-6)).